The chain runs to 317 residues: Lysosomal-associated transmembrane protein 4B (317 aa).

Residues 25 to 73 (AFGAKGTDPAEARSSRGIEEAGPRAHGRAGREPERRRSRQQRRGGLQAR) are disordered. Over residues 32–59 (DPAEARSSRGIEEAGPRAHGRAGREPER) the composition is skewed to basic and acidic residues. Helical transmembrane passes span 117–137 (ILLGVWYLIINAVVLLILLSA), 163–183 (MCIAIAISLLMILICAMATYG), 191–211 (WIIPFFCYQIFDFALNMLVAI), and 244–264 (CLVLIILLFISIILTFKGYLI). The interval 205 to 221 (LNMLVAITVLIYPNSIQ) is required for NEDD4 interaction.

It belongs to the LAPTM4/LAPTM5 transporter family. As to quaternary structure, homooligomer; upon reaching the lysosomes. Interacts with MCOLN1. Interacts with NEDD4; may play a role in the lysosomal sorting of LAPTM4B; enhances HGS association with NEDD4; mediates inhibition of EGFR degradation. Interacts with PIP5K1C; promotes SNX5 association with LAPTM4B; kinase activity of PIP5K1C is required; interaction is regulated by phosphatidylinositol 4,5-bisphosphate generated by PIP5K1C. Interacts with HGS; promotes HGS ubiquitination. Interacts with SNX5. Interacts with SLC3A2 and SLC7A5; recruits SLC3A2 and SLC7A5 to lysosomes to promote leucine uptake into these organelles and is required for mTORC1 activation. Interacts with LRRC32; decreases TGFB1 production in regulatory T cells. Interacts with BECN1; competes with EGFR for LAPTM4B binding; regulates EGFR activity. Interacts with EGFR; positively correlates with EGFR activation. Post-translationally, undergoes proteolytic cleavage following delivery to the lysosomes. In terms of processing, ubiquitinated by NEDD4.

It is found in the endomembrane system. The protein localises to the late endosome membrane. It localises to the cell membrane. Its subcellular location is the cell projection. The protein resides in the lysosome membrane. It is found in the endosome membrane. The protein localises to the endosome. It localises to the multivesicular body membrane. Its subcellular location is the multivesicular body lumen. In terms of biological role, required for optimal lysosomal function. Blocks EGF-stimulated EGFR intraluminal sorting and degradation. Conversely by binding with the phosphatidylinositol 4,5-bisphosphate, regulates its PIP5K1C interaction, inhibits HGS ubiquitination and relieves LAPTM4B inhibition of EGFR degradation. Recruits SLC3A2 and SLC7A5 (the Leu transporter) to the lysosome, promoting entry of leucine and other essential amino acid (EAA) into the lysosome, stimulating activation of proton-transporting vacuolar (V)-ATPase protein pump (V-ATPase) and hence mTORC1 activation. Plays a role as negative regulator of TGFB1 production in regulatory T cells. Binds ceramide and facilitates its exit from late endosome in order to control cell death pathways. The sequence is that of Lysosomal-associated transmembrane protein 4B from Homo sapiens (Human).